The chain runs to 344 residues: Dihydroorotate dehydrogenase (quinone) (344 aa).

Residues 65-69 (AGLDK) and Thr89 contribute to the FMN site. A substrate-binding site is contributed by Lys69. Residue 114 to 118 (NRMGF) participates in substrate binding. The FMN site is built by Asn145 and Asn178. Asn178 serves as a coordination point for substrate. The active-site Nucleophile is the Ser181. Asn183 lines the substrate pocket. FMN contacts are provided by Lys223 and Thr251. 252–253 (NT) contributes to the substrate binding site. Residues Gly274, Gly303, and 324–325 (YS) contribute to the FMN site.

It belongs to the dihydroorotate dehydrogenase family. Type 2 subfamily. Monomer. FMN serves as cofactor.

It localises to the cell membrane. It catalyses the reaction (S)-dihydroorotate + a quinone = orotate + a quinol. It participates in pyrimidine metabolism; UMP biosynthesis via de novo pathway; orotate from (S)-dihydroorotate (quinone route): step 1/1. Catalyzes the conversion of dihydroorotate to orotate with quinone as electron acceptor. The polypeptide is Dihydroorotate dehydrogenase (quinone) (Cupriavidus taiwanensis (strain DSM 17343 / BCRC 17206 / CCUG 44338 / CIP 107171 / LMG 19424 / R1) (Ralstonia taiwanensis (strain LMG 19424))).